A 65-amino-acid polypeptide reads, in one-letter code: uncharacterized protein (65 aa).

2 helical membrane passes run 4–24 (AWLF…DKVL) and 39–59 (LPIP…FIVF).

It localises to the membrane. This is an uncharacterized protein from Streptococcus pneumoniae serotype 2 (strain D39 / NCTC 7466).